Reading from the N-terminus, the 79-residue chain is uncharacterized protein (79 aa).

Transmembrane regions (helical) follow at residues 18-38 and 50-70; these read IWII…IVLI and GITF…FFLF.

Its subcellular location is the host membrane. This is an uncharacterized protein from Spiroplasma virus SpV1-R8A2 B (SpV1).